The chain runs to 322 residues: Homoserine kinase (322 aa).

107-117 (PLSSGMGGSAA) lines the ATP pocket.

This sequence belongs to the GHMP kinase family. Homoserine kinase subfamily.

Its subcellular location is the cytoplasm. It catalyses the reaction L-homoserine + ATP = O-phospho-L-homoserine + ADP + H(+). Its pathway is amino-acid biosynthesis; L-threonine biosynthesis; L-threonine from L-aspartate: step 4/5. Its function is as follows. Catalyzes the ATP-dependent phosphorylation of L-homoserine to L-homoserine phosphate. This chain is Homoserine kinase, found in Xylella fastidiosa (strain M23).